We begin with the raw amino-acid sequence, 140 residues long: Large ribosomal subunit protein uL14 (140 aa).

The residue at position 17 (Ser-17) is a Phosphoserine. Tyr-38 bears the Phosphotyrosine mark.

This sequence belongs to the universal ribosomal protein uL14 family. In terms of assembly, component of the large ribosomal subunit.

The protein localises to the cytoplasm. In terms of biological role, component of the large ribosomal subunit. The ribosome is a large ribonucleoprotein complex responsible for the synthesis of proteins in the cell. The sequence is that of Large ribosomal subunit protein uL14 (RPL23) from Canis lupus familiaris (Dog).